A 102-amino-acid polypeptide reads, in one-letter code: Urease subunit beta (102 aa).

The protein belongs to the urease beta subunit family. Heterotrimer of UreA (gamma), UreB (beta) and UreC (alpha) subunits. Three heterotrimers associate to form the active enzyme.

The protein resides in the cytoplasm. The enzyme catalyses urea + 2 H2O + H(+) = hydrogencarbonate + 2 NH4(+). Its pathway is nitrogen metabolism; urea degradation; CO(2) and NH(3) from urea (urease route): step 1/1. The chain is Urease subunit beta from Opitutus terrae (strain DSM 11246 / JCM 15787 / PB90-1).